The primary structure comprises 341 residues: UDP-3-O-acylglucosamine N-acyltransferase (341 aa).

His237 functions as the Proton acceptor in the catalytic mechanism.

It belongs to the transferase hexapeptide repeat family. LpxD subfamily. Homotrimer.

It catalyses the reaction a UDP-3-O-[(3R)-3-hydroxyacyl]-alpha-D-glucosamine + a (3R)-hydroxyacyl-[ACP] = a UDP-2-N,3-O-bis[(3R)-3-hydroxyacyl]-alpha-D-glucosamine + holo-[ACP] + H(+). Its pathway is bacterial outer membrane biogenesis; LPS lipid A biosynthesis. Its function is as follows. Catalyzes the N-acylation of UDP-3-O-acylglucosamine using 3-hydroxyacyl-ACP as the acyl donor. Is involved in the biosynthesis of lipid A, a phosphorylated glycolipid that anchors the lipopolysaccharide to the outer membrane of the cell. The protein is UDP-3-O-acylglucosamine N-acyltransferase of Azoarcus sp. (strain BH72).